A 258-amino-acid polypeptide reads, in one-letter code: L-fucose dehydrogenase (258 aa).

Ser-17, Ile-19, Arg-39, His-40, Glu-63, Leu-64, and Asn-90 together coordinate NADP(+). Beta-L-fucose contacts are provided by Asn-94, Ser-140, Lys-141, Gln-147, and Tyr-153. 2 residues coordinate NADP(+): Tyr-153 and Lys-157. Residue Tyr-153 is the Proton acceptor of the active site. Beta-L-fucose contacts are provided by Ala-184 and Glu-185. NADP(+)-binding residues include Val-186 and Thr-188.

This sequence belongs to the short-chain dehydrogenases/reductases (SDR) family. Homotetramer; dimer of dimers.

It catalyses the reaction beta-L-fucose + NADP(+) = L-fucono-1,5-lactone + NADPH + H(+). The catalysed reaction is D-arabinose + NADP(+) = D-arabinono-1,5-lactone + NADPH + H(+). The protein operates within carbohydrate degradation; L-fucose degradation. L-fucose dehydrogenase involved in an L-fucose degradation pathway. Catalyzes the oxidation of L-fucose to L-fucono-1,5-lactone. Can also act on D-arabinose, with lower catalytic efficiency, and has weak activity with L-galactose and 4-deoxy-L-fucose. Shows a preference for NADP(+) over NAD(+). The chain is L-fucose dehydrogenase from Burkholderia multivorans (strain ATCC 17616 / 249).